The following is a 443-amino-acid chain: CBL-interacting protein kinase 2 (443 aa).

One can recognise a Protein kinase domain in the interval 13 to 267; that stretch reads YEMGKLLGQG…MDKIMENPWF (255 aa). Residues 19–27 and K42 each bind ATP; that span reads LGQGTFAKV. D135 functions as the Proton acceptor in the catalytic mechanism. The interval 153-182 is activation loop; the sequence is DFGLSALADCKRQDGLLHTTCGTPAYVAPE. The 28-residue stretch at 302–329 folds into the NAF domain; sequence TLEKKPSNLNAFDIISLSTGLDLSGMFE. The PPI stretch occupies residues 333-362; that stretch reads KKESKFTSTSTASTIISKIEDIAKGLRLKL.

This sequence belongs to the protein kinase superfamily. CAMK Ser/Thr protein kinase family. SNF1 subfamily. Requires Mn(2+) as cofactor.

It catalyses the reaction L-seryl-[protein] + ATP = O-phospho-L-seryl-[protein] + ADP + H(+). The enzyme catalyses L-threonyl-[protein] + ATP = O-phospho-L-threonyl-[protein] + ADP + H(+). Functionally, CIPK serine-threonine protein kinases interact with CBL proteins. Binding of a CBL protein to the regulatory NAF domain of CIPK protein lead to the activation of the kinase in a calcium-dependent manner. The chain is CBL-interacting protein kinase 2 (CIPK2) from Oryza sativa subsp. japonica (Rice).